Reading from the N-terminus, the 304-residue chain is Tegument protein VP22 (304 aa).

2 disordered regions span residues 23–68 and 112–184; these read YSTV…PNDD and STSN…GTPK. Residues 43–58 show a composition bias toward basic and acidic residues; that stretch reads RENDLYDKQSVSKEND. The segment covering 123–142 has biased composition (pro residues); the sequence is AQPPPRGAAAAPPPRVPTRP. The segment covering 143 to 154 has biased composition (low complexity); sequence PTRAAATSTTPR. The Nuclear localization signal motif lies at 160–163; it reads PKQR. The Nuclear export signal signature appears at 233–245; that stretch reads LDRFLKAAAIRIL. Positions 262–304 are disordered; sequence STPDGYAAAGPNGYDRRPRTASRRRSLKCKPPADDFFDDTNSG. Basic residues predominate over residues 280-289; sequence RTASRRRSLK.

Belongs to the alphaherpesvirinae VP22 tegument protein family. In terms of assembly, interacts with gE (via C-terminus); this interaction is necessary for the recruitment of VP22 to the Golgi and its packaging into virions. Interacts with gM (via C-terminus). Interacts with VP16; this interaction allows the formation of a tripartite complex composed of VP16, VP22 and UL41/VHS. Interacts with the capsid-binding protein UL16. Interacts with host CGAS. In terms of processing, highly phosphorylated in the host cell. Packaging is selective for underphosphorylated forms.

The protein resides in the virion tegument. It localises to the host cytoplasm. Its subcellular location is the host nucleus. It is found in the host Golgi apparatus. In terms of biological role, tegument protein that plays different roles during the time course of infection. Participates in both the accumulation of viral mRNAs and viral protein translation at late time of infection. Modulates the RNase activity of the virion host shutoff protein UL41 probably to ensure necessary levels of key cellular mRNAs and proteins. Plays a role in microtubule reorganization that occurs after viral infection by stabilizing microtubule network. Plays a role in the inhibition of host innate immune system by targeting the CGAS enzymatic activity which is the principal cytosolic DNA sensor that detects invading viral DNA. Acts by mediating disruption of liquid-like droplets in which CGAS is activated, thereby preventing CGAS activity. This chain is Tegument protein VP22, found in Equine herpesvirus 1 (strain Ab4p) (EHV-1).